The following is a 286-amino-acid chain: uncharacterized protein (286 aa).

The protein belongs to the NmrA-type oxidoreductase family.

This is an uncharacterized protein from Bacillus subtilis (strain 168).